The following is a 3413-amino-acid chain: Protein pecanex (3413 aa).

Helical transmembrane passes span 33–53 and 57–77; these read VVHL…YLYF and WLTW…VKLA. N-linked (GlcNAc...) asparagine glycosylation occurs at Asn164. A compositionally biased stretch (low complexity) spans 182–195; the sequence is GSQQDQQSLAGSAS. Disordered stretches follow at residues 182–213 and 235–314; these read GSQQ…STSA and GSSA…ENKL. Positions 196–213 are enriched in polar residues; sequence VSKSIRSTGPGGNSSTSA. A glycan (N-linked (GlcNAc...) asparagine) is linked at Asn208. Low complexity predominate over residues 302–312; the sequence is AAAAANSNAEN. Asn317 is a glycosylation site (N-linked (GlcNAc...) asparagine). Disordered regions lie at residues 327–363, 379–403, 540–609, and 625–651; these read PSFL…GDAP, LVNP…RLKH, PGTG…GTGG, and PSVS…NPLP. Over residues 330 to 354 the composition is skewed to polar residues; the sequence is LHSQPTNKARGQTNPRQHFITSAPS. Basic and acidic residues predominate over residues 392–402; it reads RSSETHDERLK. The span at 541-559 shows a compositional bias: gly residues; that stretch reads GTGGSVTGGGGAAGGGGSA. N-linked (GlcNAc...) asparagine glycans are attached at residues Asn569 and Asn581. Polar residues predominate over residues 569–582; sequence NATSYKHGSSQSNK. The span at 599–609 shows a compositional bias: gly residues; that stretch reads GTSGGAGGTGG. A compositionally biased stretch (polar residues) spans 625 to 634; sequence PSVSNLSPHP. Residue Asn685 is glycosylated (N-linked (GlcNAc...) asparagine). The span at 720-730 shows a compositional bias: basic and acidic residues; the sequence is EKTAHEEHGDD. Disordered stretches follow at residues 720–745, 816–873, 886–921, and 1002–1021; these read EKTA…DDEV, HHHS…NRQP, RQEL…DCEQ, and KQTK…HSIS. The span at 816 to 826 shows a compositional bias: basic residues; it reads HHHSHLHHHKA. Residues 828–846 show a composition bias toward low complexity; sequence SVEGAGPSGGSVAVGVSAG. A compositionally biased stretch (acidic residues) spans 847 to 856; sequence NDDEDEETED. The N-linked (GlcNAc...) asparagine glycan is linked to Asn857. Residues 1008–1021 show a composition bias toward low complexity; the sequence is SRNSSSSNSTHSIS. N-linked (GlcNAc...) asparagine glycans are attached at residues Asn1010, Asn1015, Asn1069, and Asn1199. 2 consecutive transmembrane segments (helical) span residues 1315 to 1335 and 1343 to 1363; these read MHVL…AAIL and LCAL…VKSV. An N-linked (GlcNAc...) asparagine glycan is attached at Asn1375. Helical transmembrane passes span 1376 to 1396, 1423 to 1443, 1474 to 1494, and 1504 to 1524; these read KTVA…LLLL, VVAL…IIFS, LLGS…LYGP, and GTQY…GYHL. Asn1572 carries an N-linked (GlcNAc...) asparagine glycan. Disordered stretches follow at residues 1577–1675, 1722–1744, and 1760–1813; these read QLTT…TGEP, DKIS…GAGT, and AEAE…LPDP. 2 stretches are compositionally biased toward basic and acidic residues: residues 1587–1598 and 1607–1620; these read RQTDVKTEHEQI and TVNE…HGAD. Residues 1639 to 1666 show a composition bias toward low complexity; it reads KTSSLGSSQQTLGKTISSSKRAITASSS. Positions 1725–1738 are enriched in polar residues; it reads SSSSATNPGDMSTL. 5 tandem repeats follow at residues 1776–1777, 1778–1779, 1780–1781, 1782–1783, and 1784–1785. The segment at 1776–1785 is 5 X 2 AA tandem repeats of G-T; sequence GTGTGTGTGT. Residues Asn1791 and Asn1804 are each glycosylated (N-linked (GlcNAc...) asparagine). Low complexity predominate over residues 1799-1808; the sequence is GNTNSNGTGN. A run of 5 helical transmembrane segments spans residues 1830–1850, 1856–1876, 1914–1934, 1940–1960, and 1976–1996; these read LVVM…TVFT, LNVV…YIVP, LYIY…AISS, QLIV…ICAL, and IIIF…ETFI. Residues 2344–2463 are disordered; sequence SMGGAPPAQA…HSFANISRQT (120 aa). Over residues 2346–2370 the composition is skewed to low complexity; it reads GGAPPAQAPAAAGGASSAPATAGVA. 2 N-linked (GlcNAc...) asparagine glycosylation sites follow: Asn2380 and Asn2387. A compositionally biased stretch (low complexity) spans 2389-2411; that stretch reads SAHGGQAGPSSGQSKSQSQQQLR. Positions 2437-2447 are enriched in gly residues; it reads GTGGVTGGGGD. Over residues 2449–2463 the composition is skewed to polar residues; the sequence is QLSSSHSFANISRQT. 3 N-linked (GlcNAc...) asparagine glycosylation sites follow: Asn2458, Asn2619, and Asn2717. Disordered stretches follow at residues 2908-2997 and 3198-3242; these read LNRE…SSGS and ESST…GDDG. The span at 2940 to 2956 shows a compositional bias: basic and acidic residues; sequence RRPEVGSSRGRDHERRA. N-linked (GlcNAc...) asparagine glycosylation occurs at Asn3246. Residues 3295-3413 are disordered; it reads AEESKEKGTA…NGESEAGTTV (119 aa). Residues 3310–3323 are compositionally biased toward acidic residues; the sequence is EGEEGVGEMEIEPE. The segment covering 3364–3377 has biased composition (low complexity); sequence TSSTSSAKSTSSPS. Positions 3380–3406 are enriched in acidic residues; sequence QEEEDAVDPEETPELASEESPSDENGE.

It belongs to the pecanex family.

The protein localises to the membrane. Its function is as follows. Involved in neurogenesis. The protein is Protein pecanex (pcx) of Drosophila melanogaster (Fruit fly).